The chain runs to 363 residues: Homeobox protein Hox-A2a (363 aa).

Disordered regions lie at residues 30 to 88 (DSFQ…LPPE), 98 to 117 (SKRN…GPVC), 189 to 220 (RMKH…SDEE), and 268 to 308 (DKNL…LDVS). Polar residues predominate over residues 31–44 (SFQSSSIKSSTLSR). The Antp-type hexapeptide motif lies at 88–93 (EYPWMR). The span at 103–113 (LPNSTTTTISN) shows a compositional bias: polar residues. Residues 137 to 196 (SRRLRTAYTNTQLLELEKEFHFNKYLCRPRRVEIAALLDLTERQVKVWFQNRRMKHKRQT) constitute a DNA-binding region (homeobox).

This sequence belongs to the Antp homeobox family. Proboscipedia subfamily.

The protein resides in the nucleus. In terms of biological role, sequence-specific transcription factor which is part of a developmental regulatory system that provides cells with specific positional identities on the anterior-posterior axis. The protein is Homeobox protein Hox-A2a (hoxa2a) of Takifugu rubripes (Japanese pufferfish).